The primary structure comprises 340 residues: Deubiquitinase SseL (340 aa).

H223 is an active-site residue. The Nucleophile role is filled by C285.

This sequence belongs to the peptidase C79 family.

It localises to the secreted. The protein localises to the host cytoplasm. Its function is as follows. Effector proteins function to alter host cell physiology and promote bacterial survival in host tissues. This protease targets the host cell ubiquitin pathway by acting as a deubiquitinase in infected host cells. This Salmonella choleraesuis (strain SC-B67) protein is Deubiquitinase SseL (sseL).